The chain runs to 278 residues: Tropomyosin A (278 aa).

Residues 1 to 270 are a coiled coil; the sequence is IMMAMKLEKE…YRAISGELDT (270 aa). The segment at 92 to 134 is disordered; the sequence is DFEQSSGRLTETSTKLDDASKAAEESERNRKTLETRSISDDER. Residues 95 to 104 show a composition bias toward polar residues; sequence QSSGRLTETS. Residues 105 to 134 are compositionally biased toward basic and acidic residues; that stretch reads TKLDDASKAAEESERNRKTLETRSISDDER.

It belongs to the tropomyosin family. In terms of assembly, homodimer.

Tropomyosin, in association with the troponin complex, plays a central role in the calcium dependent regulation of muscle contraction. The protein is Tropomyosin A of Echinococcus granulosus (Hydatid tapeworm).